The sequence spans 411 residues: Lysosome-associated membrane glycoprotein 3 (411 aa).

Positions 1-21 (MPGQISAVAVLFLSLTVILHG) are cleaved as a signal peptide. Residues 22–376 (YQIREKEFPK…NVNECLSDYT (355 aa)) are Lumenal-facing. Over residues 172 to 192 (HKSTTNQRPTLSTNVLGTSTP) the composition is skewed to polar residues. The disordered stretch occupies residues 172–204 (HKSTTNQRPTLSTNVLGTSTPTHKDRSTTSPVP). Asparagine 227 is a glycosylation site (N-linked (GlcNAc...) asparagine). Disulfide bonds link cysteine 232/cysteine 269 and cysteine 334/cysteine 371. The chain crosses the membrane as a helical span at residues 377-397 (VVLPMVAIIVVVICVVGLSVY). Residues 398 to 411 (KIRQRHQSSAYQRI) lie on the Cytoplasmic side of the membrane.

The protein belongs to the LAMP family. In terms of assembly, monomer. Interacts with FURIN.

It is found in the cell surface. The protein resides in the lysosome membrane. The protein localises to the cytoplasmic vesicle membrane. Its subcellular location is the early endosome membrane. Its function is as follows. Lysosomal membrane glycoprotein which plays a role in the unfolded protein response (UPR) that contributes to protein degradation and cell survival during proteasomal dysfunction. Plays a role in the process of fusion of the lysosome with the autophagosome, thereby modulating the autophagic process. Promotes hepatocellular lipogenesis through activation of the PI3K/Akt pathway. May also play a role in dendritic cell function and in adaptive immunity. This is Lysosome-associated membrane glycoprotein 3 (Lamp3) from Mus musculus (Mouse).